The chain runs to 170 residues: MKTQRDSPSLGRWSLVLLLLGLVMPLAIVAQVLSYQEAVLRAIDGINQRSSDANLYRLLDLDPRPTMDGDPDTPKPVSFTVKETVCPRTTQKSPEDCDFKEDGLVKRCVGTVILNQARDSFDISCDKDNRRSARLGNFFRKVKEKIGGGLKKVGQKIKDFLGNLVPRTAS.

A signal peptide spans 1 to 30; sequence MKTQRDSPSLGRWSLVLLLLGLVMPLAIVA. A propeptide spans 31 to 131 (cathelin-like domain (CLD)); the sequence is QVLSYQEAVL…DISCDKDNRR (101 aa). 2 cysteine pairs are disulfide-bonded: Cys-86/Cys-97 and Cys-108/Cys-125. The interval 150–162 is active core; sequence LKKVGQKIKDFLG.

This sequence belongs to the cathelicidin family. Monomer, homodimer or homotrimer (in vitro). Oligomerizes as tetra- or hexamer in solution (in vitro). In terms of processing, proteolytically cleaved by proteinase PRTN3 into antibacterial peptide LL-37. Proteolytically cleaved by cathepsin CTSG and neutrophil elastase ELANE. Post-translationally, resistant to proteolytic degradation in solution, and when bound to both zwitterionic (mimicking mammalian membranes) and negatively charged membranes (mimicking bacterial membranes). After secretion onto the skin surface, the CAMP gene product is processed by a serine protease-dependent mechanism into multiple novel antimicrobial peptides distinct from and shorter than cathelicidin LL-37. These peptides show enhanced antimicrobial action, acquiring the ability to kill skin pathogens such as S.aureus, E.coli and C.albicans. These peptides have lost the ability to stimulate CXCL8/IL8 release from keratinocytes. The peptides act synergistically, killing bacteria at lower concentrations when present together, and maintain activity at increased salt condition.

The protein resides in the secreted. It is found in the vesicle. Antimicrobial protein that is an integral component of the innate immune system. Binds to bacterial lipopolysaccharides (LPS). Acts via neutrophil N-formyl peptide receptors to enhance the release of CXCL2. Postsecretory processing generates multiple cathelicidin antimicrobial peptides with various lengths which act as a topical antimicrobial defense in sweat on skin. The unprocessed precursor form, cathelicidin antimicrobial peptide, inhibits the growth of Gram-negative E.coli and E.aerogenes with efficiencies comparable to that of the mature peptide LL-37 (in vitro). In terms of biological role, antimicrobial peptide that is an integral component of the innate immune system. Binds to bacterial lipopolysaccharides (LPS). Causes membrane permeabilization by forming transmembrane pores (in vitro). Causes lysis of E.coli. Exhibits antimicrobial activity against Gram-negative bacteria such as P.aeruginosa, S.typhimurium, E.aerogenes, E.coli and P.syringae, Gram-positive bacteria such as L.monocytogenes, S.epidermidis, S.pyogenes and S.aureus, as well as vancomycin-resistant enterococci (in vitro). Exhibits antimicrobial activity against methicillin-resistant S.aureus, P.mirabilis, and C.albicans in low-salt media, but not in media containing 100 mM NaCl (in vitro). Forms chiral supramolecular assemblies with quinolone signal (PQS) molecules of P.aeruginosa, which may lead to interference of bacterial quorum signaling and perturbance of bacterial biofilm formation. May form supramolecular fiber-like assemblies on bacterial membranes. Induces cytokine and chemokine producation as well as TNF/TNFA and CSF2/GMCSF production in normal human keratinocytes. Exhibits hemolytic activity against red blood cells. Functionally, exhibits antimicrobial activity against E.coli and B.megaterium (in vitro). The sequence is that of Cathelicidin antimicrobial peptide from Macaca fascicularis (Crab-eating macaque).